The chain runs to 841 residues: 27S pre-rRNA (guanosine(2922)-2'-O)-methyltransferase (841 aa).

S-adenosyl-L-methionine contacts are provided by Gly58, Trp60, Asp78, Asp94, and Asp119. Lys159 serves as the catalytic Proton acceptor. The stretch at 360 to 389 (QEKQRLNVKRERRRKNEMKQKELQRMQMNM) forms a coiled coil. 2 positions are modified to phosphoserine: Ser455 and Ser464. Disordered regions lie at residues 480–534 (RDAK…DDEA) and 565–654 (NNVE…HSRD). A compositionally biased stretch (basic and acidic residues) spans 505–517 (SLEKKEEEGKDYI). Over residues 518–534 (EDNDDEGVEGDSDDDEA) the composition is skewed to acidic residues. Residue Ser529 is modified to Phosphoserine. A compositionally biased stretch (polar residues) spans 574 to 585 (NTVNDGIMSSES). Basic and acidic residues predominate over residues 598–607 (HEEMHQKQDE). Composition is skewed to acidic residues over residues 608 to 621 (ADSS…DSDF) and 629 to 641 (ASEE…DSEE). A compositionally biased stretch (basic and acidic residues) spans 642-654 (EKNQTKKEKHSRD).

The protein belongs to the class I-like SAM-binding methyltransferase superfamily. RNA methyltransferase RlmE family. SPB1 subfamily. As to quaternary structure, component of the nucleolar and nucleoplasmic pre-60S ribosomal particle. Interacts with the snoRNA-associated proteins NOP1 and NOP58.

It is found in the nucleus. The protein resides in the nucleolus. The enzyme catalyses guanosine(2922) in 27S pre-rRNA + S-adenosyl-L-methionine = 2'-O-methylguanosine(2922) in 27S pre-rRNA + S-adenosyl-L-homocysteine + H(+). Its function is as follows. Required for proper assembly of pre-ribosomal particles during the biogenesis of the 60S ribosomal subunit. Specifically methylates the guanosine in position 2922 of the 25S rRNA at the stage of 27S pre-rRNA maturation. Also methylates the uridine in position 2921 in the absence of methylation of this residue guided by snoRNA snR52 at the stage of 35S pre-rRNA maturation. This Saccharomyces cerevisiae (strain ATCC 204508 / S288c) (Baker's yeast) protein is 27S pre-rRNA (guanosine(2922)-2'-O)-methyltransferase.